Consider the following 259-residue polypeptide: Phosphate import ATP-binding protein PstB (259 aa).

Positions 5–248 constitute an ABC transporter domain; the sequence is IEVNDLNVYY…NIIFSNPSAQ (244 aa). Residue 37–44 coordinates ATP; the sequence is GPSGCGKS.

Belongs to the ABC transporter superfamily. Phosphate importer (TC 3.A.1.7) family. In terms of assembly, the complex is composed of two ATP-binding proteins (PstB), two transmembrane proteins (PstC and PstA) and a solute-binding protein (PstS).

The protein resides in the cell membrane. It catalyses the reaction phosphate(out) + ATP + H2O = ADP + 2 phosphate(in) + H(+). Part of the ABC transporter complex PstSACB involved in phosphate import. Responsible for energy coupling to the transport system. The chain is Phosphate import ATP-binding protein PstB from Leifsonia xyli subsp. xyli (strain CTCB07).